The chain runs to 585 residues: Arginine--tRNA ligase (585 aa).

The 'HIGH' region motif lies at 131 to 141 (ANPTGPMHVGH).

It belongs to the class-I aminoacyl-tRNA synthetase family. In terms of assembly, monomer.

It localises to the cytoplasm. It carries out the reaction tRNA(Arg) + L-arginine + ATP = L-arginyl-tRNA(Arg) + AMP + diphosphate. This chain is Arginine--tRNA ligase, found in Allorhizobium ampelinum (strain ATCC BAA-846 / DSM 112012 / S4) (Agrobacterium vitis (strain S4)).